A 413-amino-acid chain; its full sequence is E3 ubiquitin-protein ligase makorin (413 aa).

2 C3H1-type zinc fingers span residues 2–29 and 30–57; these read PRHE…HDVA and TRNE…HTRP. Positions 61–85 are disordered; it reads ELPSCSTPQTSQNQQNLQNSGQRVR. Low complexity predominate over residues 66–82; that stretch reads STPQTSQNQQNLQNSGQ. The C3H1-type 3 zinc finger occupies 138–167; sequence QAQLMMCPYHQKSGDCNRQDMDCPFAHGNY. The RING-type zinc-finger motif lies at 213–267; that stretch reads CGICMENIFEKNLRFGILNGCQHCFCLDCIRQWRSKDQENVELATKTVRSCPECR. Residues 296-327 form a C3H1-type 4 zinc finger; sequence NTKRKICKYYSNERSRGACPFGNKCFYKHQLP.

As to quaternary structure, component of a complex at least containing lep-2, lin-28 and the long non-coding RNA lep-5, which mediates the degradation of lin-28. Expressed in seam, tail tip, and other hypodermal cells, head and tail neurons, the pharynx, intestine and the developing hermaphrodite somatic gonad. Not expressed in body wall muscle cells.

Its subcellular location is the cytoplasm. The enzyme catalyses S-ubiquitinyl-[E2 ubiquitin-conjugating enzyme]-L-cysteine + [acceptor protein]-L-lysine = [E2 ubiquitin-conjugating enzyme]-L-cysteine + N(6)-ubiquitinyl-[acceptor protein]-L-lysine.. It participates in protein modification; protein ubiquitination. Functionally, E3 ubiquitin ligase which catalyzes the covalent attachment of ubiquitin moieties onto substrate proteins. Promotes the larval to adult transition by binding to the long non-coding RNA lep-5 to target the heterochronic protein lin-28 for degradation by the proteasome. This association and degradation of lin-28 also controls the timing of the sexual differentiation of individual neurons in males including the AIM, AWA, ADF, ASJ and CEM neurons. Plays a role in governing the developmental timing of male tail tip morphogenesis. Plays a role in two aspects of male mating behavior: response to hermaphrodite contact and vulva location. May play a role in the detection of preferred food sources. This Caenorhabditis elegans protein is E3 ubiquitin-protein ligase makorin.